The primary structure comprises 137 residues: Glutamate mutase sigma subunit (137 aa).

In terms of domain architecture, B12-binding spans 3–137 (EVNLVLGVIG…KALKEDLGLM (135 aa)). Adenosylcob(III)alamin is bound by residues 13–17 (ADVHA), histidine 16, 61–63 (SSL), and 93–97 (NLVVG).

Belongs to the methylaspartate mutase GlmS subunit family. As to quaternary structure, heterotetramer composed of 2 epsilon subunits (GlmE) and 2 sigma subunits (GlmS). GlmE exists as a homodimer and GlmS as a monomer. The cofactor is adenosylcob(III)alamin.

It catalyses the reaction (2S,3S)-3-methyl-L-aspartate = L-glutamate. The protein operates within amino-acid degradation; L-glutamate degradation via mesaconate pathway; acetate and pyruvate from L-glutamate: step 1/4. Functionally, catalyzes the carbon skeleton rearrangement of L-glutamate to L-threo-3-methylaspartate ((2S,3S)-3-methylaspartate). This Carboxydothermus hydrogenoformans (strain ATCC BAA-161 / DSM 6008 / Z-2901) protein is Glutamate mutase sigma subunit.